The sequence spans 370 residues: Prolactin-releasing peptide receptor (370 aa).

Residues 1 to 62 (MASLPTQGPA…LQLVHQLKGL (62 aa)) lie on the Extracellular side of the membrane. N-linked (GlcNAc...) asparagine glycans are attached at residues N27 and N36. A helical transmembrane segment spans residues 63 to 83 (IVLLYSIVVVVGLVGNCLLVL). The Cytoplasmic portion of the chain corresponds to 84–101 (VIARVRRLHNVTNFLIGN). The chain crosses the membrane as a helical span at residues 102–122 (LALSDVLMCTACVPLTLAYAF). The Extracellular segment spans residues 123–126 (EPRG). Residues 127-147 (WVFGGGLCHLVFFLQPVTVYV) traverse the membrane as a helical segment. A disulfide bond links C134 and C211. Over 148 to 175 (SVFTLTTIAVDRYVVLVHPLRRRISLRF) the chain is Cytoplasmic. Residues 176-196 (SAYAVLAIWALSAVLALPAAL) traverse the membrane as a helical segment. Over 197-225 (HTYHVELKPHRVRLCEEFWGSQERQRQLY) the chain is Extracellular. Residues 226-246 (AWGLLLVTYLLPLLVILLSYV) traverse the membrane as a helical segment. The Cytoplasmic segment spans residues 247-276 (RVSVNLRNRVVPGCVTQSQADWDRARRRRT). The helical transmembrane segment at 277-297 (FCLLVVVVVVFAVCWLPLHVF) threads the bilayer. Residues 298–317 (NLLRDLDPHAIDPYAFGLVQ) are Extracellular-facing. A helical membrane pass occupies residues 318 to 338 (LLCHWLAMSSACYNPFIYAWL). Residues 339–369 (HDSFREELRKLLLAWPRKIAPHGQSMTVSVV) lie on the Cytoplasmic side of the membrane. The required for interaction with GRIP1, GRIP2 and PICK1 stretch occupies residues 365-370 (TVSVVI).

The protein belongs to the G-protein coupled receptor 1 family. In terms of assembly, interacts through its C-terminal region with the PDZ domain-containing proteins GRIP1, GRIP2 and PICK1. Interacts with PDZ domains 4 and 5 of GRIP1 and with the PDZ domain of PICK1.

The protein localises to the cell membrane. Functionally, receptor for prolactin-releasing peptide (PrRP). Implicated in lactation, regulation of food intake and pain-signal processing. This Bos taurus (Bovine) protein is Prolactin-releasing peptide receptor (PRLHR).